A 61-amino-acid chain; its full sequence is Photosystem II assembly protein Psb34 (61 aa).

The helical transmembrane segment at 36 to 56 (LIMAAITVVLVAGLIAVAVVA) threads the bilayer.

It belongs to the Psb34 family. In terms of assembly, part of the photosystem II (PSII) assembly intermediate RC47 complex (with D1, D2, CP47, PsbE, PsbF, PsbH, Psb27 and Psb28); minor amounts are found in other PSII complexes, including mature, dimeric PSII with PsbO and PsbV. No HliA or HliB are detected in any of these complexes. Its interaction with PSII requires both CP47 (psbB) and PsbH. HliA/HliB and Psb34 probably bind to a similar site on CP47; their binding seems to be mutually exclusive.

Its subcellular location is the cellular thylakoid membrane. Its function is as follows. Involved in photosystem II (PSII) assembly and/or repair. Probably involved in conversion of late PSII assembly intermediates into mature dimeric PSII, it may mediate the optimal equlibrium of HliA/HliB among the intermediates containing CP47 (psbB) to facilitate photoprotection during assembly. This Synechocystis sp. (strain ATCC 27184 / PCC 6803 / Kazusa) protein is Photosystem II assembly protein Psb34.